Here is a 636-residue protein sequence, read N- to C-terminus: Dehydrogenase ARMGADRAFT_1018426 (636 aa).

Positions Met-1–Ser-19 are cleaved as a signal peptide. FAD contacts are provided by residues Thr-49–Ala-50 and Glu-70–Gly-71. Residue Asn-99 is glycosylated (N-linked (GlcNAc...) asparagine). Residues Trp-104 and Asn-134–Thr-137 contribute to the FAD site. An N-linked (GlcNAc...) asparagine glycan is attached at Asn-253. Val-280 provides a ligand contact to FAD. 4 N-linked (GlcNAc...) asparagine glycosylation sites follow: Asn-333, Asn-380, Asn-394, and Asn-498. Catalysis depends on His-570, which acts as the Proton acceptor. Residues Ala-603 and Pro-614 to Ser-615 each bind FAD.

Belongs to the GMC oxidoreductase family. The cofactor is FAD.

It participates in secondary metabolite biosynthesis. Dehydrogenase, part of the gene cluster that mediates the biosynthesis of melleolides, a range of antifungal and phytotoxic polyketide derivatives composed of an orsellinic acid (OA) moiety esterified to various sesquiterpene alcohols. The first step in melleolides biosynthesis is performed by the delta(6)-protoilludene synthase PRO1 which catalyzes the cyclization of farnesyl diphosphate to protoilludene. The orsellinic acid synthase armB produces OA by condensing acetyl-CoA with 3 malonyl-CoA units in a three-round chain elongation reaction folowed by a C2-C7 ring closure. ArmB further catalyzes the trans-esterification of OA to the various sesquiterpene alcohols resulting from the hydroxylation of protoilludene. The melleolides cluster also includes 5 cytochrome P450 monooxygenases, 4 NAD(+)-dependent oxidoreductases, one flavin-dependent oxidoreductase, and one O-methyltransferase. The cytochrome P450 monooxygenases may be involved in protoilludene hydroxylation to elaborate melleolides with multiple alcohol groups, such as melleolide D, which carries alcohol functionalities at C-4, C-5, C-10, and C-13. The role of the NAD(+)-dependent enzymes remains unknown. Numerous melleolides, including arnamial, show 5'-O-methylation of the aromatic moiety which may be catalyzed by the methyltransferase encoded in the cluster. The flavin-dependent oxidoreductase might represent the dehydrogenase yielding the aldehyde in position 1 of arnamial and other melleolides. Finally, several halogenase localized outside of the cluster, are able to catalyze the transfer of a single chlorine atom to the melleolide backbone, resulting in a 6'-chloromelleolide product. This Armillaria gallica (Bulbous honey fungus) protein is Dehydrogenase ARMGADRAFT_1018426.